Here is a 743-residue protein sequence, read N- to C-terminus: Cap-specific mRNA (nucleoside-2'-O-)-methyltransferase 2 (743 aa).

Positions 113–326 (ELCTQAWAKF…LYIVCLDYQA (214 aa)) constitute an Adrift-type SAM-dependent 2'-O-MTase domain. Residue lysine 121 is part of the active site. The S-adenosyl-L-methionine site is built by glycine 152, tryptophan 171, and aspartate 239. Aspartate 239 is a catalytic residue. Residue lysine 279 is the Proton acceptor of the active site.

It is found in the nucleus. It localises to the cytoplasm. It catalyses the reaction a 5'-end (N(7)-methyl 5'-triphosphoguanosine)-(2'-O-methyl-ribonucleoside)-(ribonucleotide) in mRNA + S-adenosyl-L-methionine = a 5'-end (N(7)-methyl 5'-triphosphoguanosine)-(2'-O-methyl-ribonucleoside)-(2'-O-methyl-ribonucleotide) in mRNA + S-adenosyl-L-homocysteine + H(+). Functionally, S-adenosyl-L-methionine-dependent methyltransferase that mediates mRNA cap2 2'-O-ribose methylation to the 5'-cap structure of mRNAs. Methylates the ribose of the second nucleotide of a m(7)GpppG-capped mRNA and small nuclear RNA (snRNA) (cap0) to produce m(7)GpppRmpNm (cap2). The sequence is that of Cap-specific mRNA (nucleoside-2'-O-)-methyltransferase 2 (cmtr2) from Danio rerio (Zebrafish).